Here is a 146-residue protein sequence, read N- to C-terminus: Basic phospholipase A2 73 (146 aa).

An N-terminal signal peptide occupies residues 1-19 (MYPAHLLVLLAVCVSLLGA). A propeptide spanning residues 20 to 27 (ASIPPLPL) is cleaved from the precursor. 7 disulfide bridges follow: Cys-38-Cys-98, Cys-54-Cys-145, Cys-56-Cys-72, Cys-71-Cys-126, Cys-78-Cys-119, Cys-87-Cys-112, and Cys-105-Cys-117. 3 residues coordinate Ca(2+): Tyr-55, Gly-57, and Gly-59. His-75 is a catalytic residue. Asp-76 contributes to the Ca(2+) binding site. The active site involves Asp-120.

Belongs to the phospholipase A2 family. Group I subfamily. D49 sub-subfamily. It depends on Ca(2+) as a cofactor. Expressed by the venom gland.

The protein resides in the secreted. The enzyme catalyses a 1,2-diacyl-sn-glycero-3-phosphocholine + H2O = a 1-acyl-sn-glycero-3-phosphocholine + a fatty acid + H(+). Its function is as follows. Snake venom phospholipase A2 (PLA2) that inhibits neuromuscular transmission by blocking acetylcholine release from the nerve termini. PLA2 catalyzes the calcium-dependent hydrolysis of the 2-acyl groups in 3-sn-phosphoglycerides. The chain is Basic phospholipase A2 73 from Hydrophis hardwickii (Hardwick's spine-bellied seasnake).